Consider the following 165-residue polypeptide: uncharacterized protein (165 aa).

The tract at residues 49–165 (QLKPQGPKRP…VAQQREIAQK (117 aa)) is disordered. Polar residues predominate over residues 94–106 (MNNNNNYKISYTS). Over residues 120-135 (TLQRTTPQAQPTPQQP) the composition is skewed to low complexity. Over residues 139–157 (SRSSGGITGAVNNRPQMVA) the composition is skewed to polar residues.

This is an uncharacterized protein from Caenorhabditis elegans.